A 504-amino-acid chain; its full sequence is ATP synthase subunit alpha 2 (504 aa).

169–176 (GDRQTGKT) contributes to the ATP binding site.

This sequence belongs to the ATPase alpha/beta chains family. F-type ATPases have 2 components, CF(1) - the catalytic core - and CF(0) - the membrane proton channel. CF(1) has five subunits: alpha(3), beta(3), gamma(1), delta(1), epsilon(1). CF(0) has three main subunits: a(1), b(2) and c(9-12). The alpha and beta chains form an alternating ring which encloses part of the gamma chain. CF(1) is attached to CF(0) by a central stalk formed by the gamma and epsilon chains, while a peripheral stalk is formed by the delta and b chains.

Its subcellular location is the cell membrane. The catalysed reaction is ATP + H2O + 4 H(+)(in) = ADP + phosphate + 5 H(+)(out). Produces ATP from ADP in the presence of a proton gradient across the membrane. The alpha chain is a regulatory subunit. This Listeria monocytogenes serotype 4b (strain F2365) protein is ATP synthase subunit alpha 2.